Consider the following 273-residue polypeptide: 4-hydroxy-tetrahydrodipicolinate reductase (273 aa).

Residues 11-16 (GAGGRM) and E36 contribute to the NAD(+) site. An NADP(+)-binding site is contributed by R37. Residues 100–102 (GTT) and 124–127 (AANY) each bind NAD(+). H157 (proton donor/acceptor) is an active-site residue. H158 contributes to the (S)-2,3,4,5-tetrahydrodipicolinate binding site. K161 acts as the Proton donor in catalysis. A (S)-2,3,4,5-tetrahydrodipicolinate-binding site is contributed by 167–168 (GT).

The protein belongs to the DapB family.

The protein resides in the cytoplasm. It catalyses the reaction (S)-2,3,4,5-tetrahydrodipicolinate + NAD(+) + H2O = (2S,4S)-4-hydroxy-2,3,4,5-tetrahydrodipicolinate + NADH + H(+). It carries out the reaction (S)-2,3,4,5-tetrahydrodipicolinate + NADP(+) + H2O = (2S,4S)-4-hydroxy-2,3,4,5-tetrahydrodipicolinate + NADPH + H(+). It functions in the pathway amino-acid biosynthesis; L-lysine biosynthesis via DAP pathway; (S)-tetrahydrodipicolinate from L-aspartate: step 4/4. Functionally, catalyzes the conversion of 4-hydroxy-tetrahydrodipicolinate (HTPA) to tetrahydrodipicolinate. This Acinetobacter baylyi (strain ATCC 33305 / BD413 / ADP1) protein is 4-hydroxy-tetrahydrodipicolinate reductase.